A 563-amino-acid chain; its full sequence is MYLKLLEEAGRLMKQAVADAGYTVEDMSLVESQHADVSSSLPFRLAKELKKNPKEIAAAIVEKMGKSEYIDRVEATGAYINFYASQKYITDSLKEILSEKKFFELEPNGIKVILEHTSANPTGPLHVGRGRNPIIGDTLARLLRAGGYDLEVQYYVDDMGKQEATIVWGYDHLDRIKPGKPDTDKPDHEIVEVYRAATDLRKSDEAVEKEISEILNAYEHMDPATAVKFREMVERCLEGQKMTLARMNVFYDRFVWESDFVRDGSVNKAVKKLAESQYATTKDGALALDLSSFGMDKEFVLTRADGTSLYTTRDIAFHVWKLARCDRAINVLGEDQKLAMQRLNAALSILGEKKAPTIVFYSFVSLPEGRMSTRKGVVVNLDDLLDEAVERAYVEVDKRRKDIPEEKKRQIAEAVGIGAVRFDIVRVAPEKSITFKWETALDFEKQGAPFIQYAHARCCSILEKAKPGEYDASMLREPEEAALVKKIAMMPYVIKNASTELKPHVIAIYARELAEAFNQFYRVSPVLIAEPELKEARLALVEASRKALAASLGMLGIAAIEEM.

Residues 119-129 (ANPTGPLHVGR) carry the 'HIGH' region motif.

This sequence belongs to the class-I aminoacyl-tRNA synthetase family.

It localises to the cytoplasm. It catalyses the reaction tRNA(Arg) + L-arginine + ATP = L-arginyl-tRNA(Arg) + AMP + diphosphate. The protein is Arginine--tRNA ligase of Methanocella arvoryzae (strain DSM 22066 / NBRC 105507 / MRE50).